A 388-amino-acid polypeptide reads, in one-letter code: Oligogalacturonate lyase (388 aa).

The protein localises to the periplasm. The catalysed reaction is 4-(4-deoxy-alpha-D-galact-4-enuronosyl)-D-galacturonate = 2 5-dehydro-4-deoxy-D-glucuronate. Its pathway is glycan metabolism; pectin degradation; 2-dehydro-3-deoxy-D-gluconate from pectin: step 3/5. Its function is as follows. Involved in degradation of pectin, which causes soft-rod disease in plants. This is Oligogalacturonate lyase (ogl) from Dickeya dadantii (strain 3937) (Erwinia chrysanthemi (strain 3937)).